Consider the following 529-residue polypeptide: Extracellular signal-regulated kinase 1 (529 aa).

Disordered regions lie at residues 1-20 and 100-131; these read MEPE…THQS and QQNQ…SNFN. The segment covering 8 to 20 has biased composition (polar residues); the sequence is FQSQMDSDNTHQS. Residues 100-117 show a composition bias toward low complexity; the sequence is QQNQQQQSQQMTQQQLQQ. The Protein kinase domain maps to 149–439; it reads YSIVKCIGHG…EALAHPYFQS (291 aa). Residues 155–163 and K178 contribute to the ATP site; that span reads IGHGAYGVV. D275 (proton acceptor) is an active-site residue. T309 carries the post-translational modification Phosphothreonine. The TXY motif lies at 309 to 311; the sequence is TEY. A Phosphotyrosine modification is found at Y311.

This sequence belongs to the protein kinase superfamily. CMGC Ser/Thr protein kinase family. MAP kinase subfamily. The cofactor is Mg(2+). Post-translationally, dually phosphorylated on Thr-309 and Tyr-311, which activates the enzyme.

The enzyme catalyses L-seryl-[protein] + ATP = O-phospho-L-seryl-[protein] + ADP + H(+). The catalysed reaction is L-threonyl-[protein] + ATP = O-phospho-L-threonyl-[protein] + ADP + H(+). Activated by tyrosine and threonine phosphorylation. In terms of biological role, kinase involved in a signal transduction pathway. This chain is Extracellular signal-regulated kinase 1 (erkA), found in Dictyostelium discoideum (Social amoeba).